The following is a 54-amino-acid chain: Large ribosomal subunit protein bL33 (54 aa).

It belongs to the bacterial ribosomal protein bL33 family.

This chain is Large ribosomal subunit protein bL33, found in Corynebacterium jeikeium (strain K411).